The primary structure comprises 259 residues: Ribonuclease PH (259 aa).

Residues arginine 88 and 126 to 128 (GTR) each bind phosphate.

The protein belongs to the RNase PH family. As to quaternary structure, homohexameric ring arranged as a trimer of dimers.

The enzyme catalyses tRNA(n+1) + phosphate = tRNA(n) + a ribonucleoside 5'-diphosphate. In terms of biological role, phosphorolytic 3'-5' exoribonuclease that plays an important role in tRNA 3'-end maturation. Removes nucleotide residues following the 3'-CCA terminus of tRNAs; can also add nucleotides to the ends of RNA molecules by using nucleoside diphosphates as substrates, but this may not be physiologically important. Probably plays a role in initiation of 16S rRNA degradation (leading to ribosome degradation) during starvation. The sequence is that of Ribonuclease PH from Mycobacterium avium (strain 104).